Reading from the N-terminus, the 691-residue chain is Elongation factor G (691 aa).

A tr-type G domain is found at 6–281 (SKYRNIGIMA…GVVDFLPSPI (276 aa)). GTP is bound by residues 15-22 (AHIDAGKT), 79-83 (DTPGH), and 133-136 (NKMD).

Belongs to the TRAFAC class translation factor GTPase superfamily. Classic translation factor GTPase family. EF-G/EF-2 subfamily.

It localises to the cytoplasm. In terms of biological role, catalyzes the GTP-dependent ribosomal translocation step during translation elongation. During this step, the ribosome changes from the pre-translocational (PRE) to the post-translocational (POST) state as the newly formed A-site-bound peptidyl-tRNA and P-site-bound deacylated tRNA move to the P and E sites, respectively. Catalyzes the coordinated movement of the two tRNA molecules, the mRNA and conformational changes in the ribosome. The chain is Elongation factor G from Wolbachia pipientis wMel.